We begin with the raw amino-acid sequence, 787 residues long: ABC transporter G family member 5 (787 aa).

Positions 1–17 (MSRFVDKLPLFDRRPSP) are enriched in basic and acidic residues. 2 disordered regions span residues 1–25 (MSRFVDKLPLFDRRPSPMEEAEGLP) and 71–116 (NDAR…EGQP). The segment covering 74–85 (RSGSSTPISSPR) has biased composition (polar residues). The ABC transporter domain maps to 121–382 (LKFTDLTYSV…FLDFGKPIPD (262 aa)). 175-182 (GASGSGKS) is an ATP binding site. Residues 484 to 691 (GVLTRRAFIN…PYEAVMQNEF (208 aa)) enclose the ABC transmembrane type-2 domain. The next 8 membrane-spanning stretches (helical) occupy residues 500-520 (VFIIRLAAVLVTGFILATIFW), 535-555 (FFAIAMSTMYYTCSDALPVFL), 576-596 (VLSHTIVGFPSLVVLSFAFAL), 599-619 (FFSVGLAGGVNGFFYFVAIVL), 620-640 (ASFWAGSGFATFLSGVVTHVM), 641-661 (LGFPVVLSTLAYFLLFSGFFI), 728-745 (SLGVNIGTGTCITTGPDF), and 760-780 (LWITVAWGFLFRILFYISLLL).

The protein belongs to the ABC transporter superfamily. ABCG family. Eye pigment precursor importer (TC 3.A.1.204) subfamily. As to expression, expressed in the crown root primordia, endodermis, pericycle and stele in the root, in leaf primordia of main and axillary shoots, and in the vascular cells and leaf epidermis of older leaves.

The protein resides in the cell membrane. Its function is as follows. Essential transporter for growth and development under abiotic stress. Mediates shoot branching by promoting the outgrowth of lateral shoots. Required for salt tolerance via Na/K homeostasis, at least partly by regulating SKC1/OsHKT1;5. Necessary for hypodermal suberization of roots, which contributes to formation of the apoplastic barrier. This Oryza sativa subsp. japonica (Rice) protein is ABC transporter G family member 5.